A 589-amino-acid polypeptide reads, in one-letter code: Type I restriction enzyme EcoAI specificity subunit (589 aa).

This sequence belongs to the type-I restriction system S methylase family. In terms of assembly, the type I restriction/modification system is composed of three polypeptides R, M and S. The restriction enzyme has stoichiometry R(2)M(2)S(1) while the methyltransferase is M(2)S(1).

Functionally, the specificity (S) subunit of a type I restriction enzyme; this subunit dictates DNA sequence specificity. The M and S subunits together form a methyltransferase (MTase) that methylates A-2 on the top strand and A-3 on the bottom strand of the sequence 5'-GAGN(7)GTCA-3'. In the presence of the R subunit the complex can also act as an endonuclease, binding to the same target sequence but cutting the DNA some distance from this site. Whether the DNA is cut or modified depends on the methylation state of the target sequence. When the target site is unmodified, the DNA is cut. When the target site is hemimethylated, the complex acts as a maintenance MTase modifying the DNA so that both strands become methylated. After locating a non-methylated recognition site, the enzyme complex serves as a molecular motor that translocates DNA in an ATP-dependent manner until a collision occurs that triggers cleavage. The protein is Type I restriction enzyme EcoAI specificity subunit of Escherichia coli.